Consider the following 171-residue polypeptide: Cytochrome c oxidase subunit 5b-2, mitochondrial (171 aa).

Residues 1–54 (MWRRIVSSHLKSISAVGSCAAPSCRHAVVESTHLSLSTRASSIPAYSSIFSRLI) constitute a mitochondrion transit peptide. Residues Cys-121, Cys-145, and Cys-148 each contribute to the Zn(2+) site.

It belongs to the cytochrome c oxidase subunit 5B (TC 3.D.4.11) family.

It is found in the mitochondrion inner membrane. Its function is as follows. This protein is one of the nuclear-coded polypeptide chains of cytochrome c oxidase, the terminal oxidase in mitochondrial electron transport. The polypeptide is Cytochrome c oxidase subunit 5b-2, mitochondrial (COX5B-2) (Arabidopsis thaliana (Mouse-ear cress)).